Consider the following 702-residue polypeptide: ATP-dependent RNA helicase DDX4 (702 aa).

Residues 22-228 form a disordered region; sequence FEKDKYSSGA…YIPPPPPEDE (207 aa). Residues 29 to 46 are compositionally biased toward polar residues; it reads SGANGDTFNRTSASSDIG. 2 stretches are compositionally biased toward gly residues: residues 58 to 68 and 125 to 137; these read GGFGRGKGFGN and RGSF…GFGL. 2 stretches are compositionally biased toward polar residues: residues 141 to 150 and 195 to 215; these read NSESDQDQGT and SGKN…SQGP. Ser-195 and Ser-199 each carry phosphoserine. The interaction with RANBP9 stretch occupies residues 201–220; it reads KSETEGGESSDSQGPKVTYI. The Q motif signature appears at 261-289; the sequence is LTFEEANLCQTLNNNIAKAGYTKLTPVQK. The Helicase ATP-binding domain maps to 292–475; that stretch reads IPIVLAGRDL…GDFLKSSYLF (184 aa). 305 to 312 is an ATP binding site; sequence AQTGSGKT. Residues 419–422 carry the DEAD box motif; that stretch reads DEAD. In terms of domain architecture, Helicase C-terminal spans 503-648; that stretch reads KLVEILRNIG…DVPAWLEEIA (146 aa). Residues 681–693 are compositionally biased toward polar residues; sequence TLNTAGISSSQAP. Positions 681–702 are disordered; the sequence is TLNTAGISSSQAPNPVDDESWD. Position 700 is a phosphoserine (Ser-700).

This sequence belongs to the DEAD box helicase family. DDX4/VASA subfamily. Found in a mRNP complex, at least composed of TDRD1, TDRD6, TDRD7 and DDX4. Interacts with RANBP9. Interacts with RANBP10. Interacts with PIWIL2 and MAEL. Interacts with BMAL1 and CLOCK. Interacts with Tex19.1 and, probably, Tex19.2. Interacts with RBM46. As to expression, testis-specific.

The protein resides in the cytoplasm. Its subcellular location is the perinuclear region. The enzyme catalyses ATP + H2O = ADP + phosphate + H(+). ATP-dependent RNA helicase required during spermatogenesis to repress transposable elements and preventing their mobilization, which is essential for the germline integrity. Acts via the piRNA metabolic process, which mediates the repression of transposable elements during meiosis by forming complexes composed of piRNAs and Piwi proteins and governs the methylation and subsequent repression of transposons. Involved in the secondary piRNAs metabolic process, the production of piRNAs in fetal male germ cells through a ping-pong amplification cycle. Required for PIWIL2 slicing-triggered piRNA biogenesis: helicase activity enables utilization of one of the slice cleavage fragments generated by PIWIL2 and processing these pre-piRNAs into piRNAs. The polypeptide is ATP-dependent RNA helicase DDX4 (Mus musculus (Mouse)).